A 219-amino-acid polypeptide reads, in one-letter code: PKHD-type hydroxylase Mmar10_1675 (219 aa).

One can recognise a Fe2OG dioxygenase domain in the interval 77–171 (TLSRILVSRY…RVAVVGWVRS (95 aa)). Fe cation contacts are provided by H95, D97, and H152. 2-oxoglutarate is bound at residue R162.

The cofactor is Fe(2+). L-ascorbate serves as cofactor.

The chain is PKHD-type hydroxylase Mmar10_1675 from Maricaulis maris (strain MCS10) (Caulobacter maris).